A 554-amino-acid chain; its full sequence is 4-coumarate--CoA ligase 3 (554 aa).

ATP-binding residues include Ser-188, Ser-189, Gly-190, Thr-191, Thr-192, and Lys-196. The (E)-4-coumaroyl-AMP site is built by Tyr-238 and Ser-242. Lys-259 serves as a coordination point for CoA. The segment at 261–330 is SBD1; sequence DLGALVDLVR…AKIPNAVLGQ (70 aa). (E)-4-coumaroyl-AMP-binding residues include Ala-308, Gln-330, Gly-331, Thr-335, and Met-343. Residues Gln-330, Gly-331, and Thr-335 each contribute to the ATP site. The SBD2 stretch occupies residues 331-398; it reads GYGMTEAGPV…IRGEQIMKGY (68 aa). Residues Asp-419 and Arg-434 each contribute to the ATP site. Positions 436 and 440 each coordinate (E)-4-coumaroyl-AMP. 2 residues coordinate CoA: Lys-442 and Gly-443. ATP is bound at residue Lys-525.

Belongs to the ATP-dependent AMP-binding enzyme family. The cofactor is Mg(2+). Expressed in root exodermis and epidermis cells, stem vascular cells, leaf developing vascular bundle cells and parenchyma cells, lemma, palea, stamens and pistil.

It catalyses the reaction (E)-ferulate + ATP + CoA = (E)-feruloyl-CoA + AMP + diphosphate. It carries out the reaction (E)-4-coumarate + ATP + CoA = (E)-4-coumaroyl-CoA + AMP + diphosphate. The catalysed reaction is (E)-caffeate + ATP + CoA = (E)-caffeoyl-CoA + AMP + diphosphate. The enzyme catalyses (E)-cinnamate + ATP + CoA = (E)-cinnamoyl-CoA + AMP + diphosphate. It catalyses the reaction (E)-ferulate + ATP + H(+) = (E)-feruloyl-AMP + diphosphate. It carries out the reaction (E)-feruloyl-AMP + CoA = (E)-feruloyl-CoA + AMP + H(+). The catalysed reaction is (E)-4-coumarate + ATP + H(+) = (E)-4-coumaroyl-AMP + diphosphate. The enzyme catalyses (E)-4-coumaroyl-AMP + CoA = (E)-4-coumaroyl-CoA + AMP + H(+). It catalyses the reaction (E)-caffeate + ATP + H(+) = (E)-caffeoyl-AMP + diphosphate. It carries out the reaction (E)-caffeoyl-AMP + CoA = (E)-caffeoyl-CoA + AMP + H(+). It participates in phytoalexin biosynthesis; 3,4',5-trihydroxystilbene biosynthesis; 3,4',5-trihydroxystilbene from trans-4-coumarate: step 1/2. In terms of biological role, involved in the phenylpropanoid metabolism by mediating the activation of a number of hydroxycinnamates for the biosynthesis of monolignols and other phenolic secondary metabolites. Catalyzes the formation of CoA esters of cinnamate, 4-coumarate, caffeate and ferulate. Is more efficient with substrates in the following order: ferulate &gt; 4-coumarate &gt; caffeate &gt; cinnamate. Possesses very high activity compared to 4CL1, 4CL2, 4CL4 and 4CL5. Cannot convert sinapate to its corresponding CoA ester. May play a role in the synthesis of lignin as well as other phenolic compounds. Follows a two-step reaction mechanism, wherein the carboxylate substrate first undergoes adenylation by ATP, followed by a thioesterification in the presence of CoA to yield the final CoA thioester. In Oryza sativa subsp. japonica (Rice), this protein is 4-coumarate--CoA ligase 3.